We begin with the raw amino-acid sequence, 274 residues long: 4-deoxy-L-threo-5-hexosulose-uronate ketol-isomerase (274 aa).

The Zn(2+) site is built by H192, H194, E199, and H241.

It belongs to the KduI family. Zn(2+) is required as a cofactor.

The enzyme catalyses 5-dehydro-4-deoxy-D-glucuronate = 3-deoxy-D-glycero-2,5-hexodiulosonate. It participates in glycan metabolism; pectin degradation; 2-dehydro-3-deoxy-D-gluconate from pectin: step 4/5. Its function is as follows. Catalyzes the isomerization of 5-dehydro-4-deoxy-D-glucuronate to 3-deoxy-D-glycero-2,5-hexodiulosonate. This Cereibacter sphaeroides (strain ATCC 17029 / ATH 2.4.9) (Rhodobacter sphaeroides) protein is 4-deoxy-L-threo-5-hexosulose-uronate ketol-isomerase.